The primary structure comprises 587 residues: tRNA (guanine(37)-N(1))-methyltransferase 2 (587 aa).

S-adenosyl-L-methionine contacts are provided by residues Arg-360 and 430–431 (DA). Residues 446–469 (ASTRSRKEDVTNKDGNHVTPTEPM) form a disordered region. Residues 450–461 (SRKEDVTNKDGN) show a composition bias toward basic and acidic residues. Asn-478 serves as a coordination point for S-adenosyl-L-methionine.

Belongs to the class I-like SAM-binding methyltransferase superfamily. TRM5/TYW2 family. Monomer.

Its subcellular location is the mitochondrion matrix. The protein localises to the nucleus. It localises to the cytoplasm. It catalyses the reaction guanosine(37) in tRNA + S-adenosyl-L-methionine = N(1)-methylguanosine(37) in tRNA + S-adenosyl-L-homocysteine + H(+). In terms of biological role, specifically methylates the N1 position of guanosine-37 in various cytoplasmic and mitochondrial tRNAs. Methylation is not dependent on the nature of the nucleoside 5' of the target nucleoside. This is the first step in the biosynthesis of wybutosine (yW), a modified base adjacent to the anticodon of tRNAs and required for accurate decoding. The polypeptide is tRNA (guanine(37)-N(1))-methyltransferase 2 (Phaeodactylum tricornutum (strain CCAP 1055/1)).